We begin with the raw amino-acid sequence, 201 residues long: MPGIFFSHPNALKEVTNKPDEVMAQKKKNFAVPWKNYLKSMLPHLETIKSSSSSSSSDTEKNKLTPNEIIQWTMSLEKLLVSEEGQAVFRAFLKSEFSEENIEFWLACEDYKATNDSEELRCKANVIYQEFIQPNANKQINIDFSTRNSVTKDLLEPTKATFNGAQKMIFILMERDSYPRFLKSEIFFRLAERHHGNNMRG.

The 117-residue stretch at 75-191 folds into the RGS domain; it reads SLEKLLVSEE…LKSEIFFRLA (117 aa).

It is found in the cell membrane. Its subcellular location is the cytoplasm. The protein localises to the cytosol. Regulates G protein-coupled receptor signaling cascades, including signaling downstream of the N-formylpeptide chemoattractant receptors and leukotriene receptors. Inhibits B cell chemotaxis. Inhibits signal transduction by increasing the GTPase activity of G protein alpha subunits, thereby driving them into their inactive GDP-bound form. This is Regulator of G-protein signaling 1 (rgs1) from Xenopus laevis (African clawed frog).